The primary structure comprises 285 residues: Bifunctional protein FolD (285 aa).

Residues 165-167 (GAS) and I232 contribute to the NADP(+) site.

It belongs to the tetrahydrofolate dehydrogenase/cyclohydrolase family. As to quaternary structure, homodimer.

The enzyme catalyses (6R)-5,10-methylene-5,6,7,8-tetrahydrofolate + NADP(+) = (6R)-5,10-methenyltetrahydrofolate + NADPH. It catalyses the reaction (6R)-5,10-methenyltetrahydrofolate + H2O = (6R)-10-formyltetrahydrofolate + H(+). It participates in one-carbon metabolism; tetrahydrofolate interconversion. Catalyzes the oxidation of 5,10-methylenetetrahydrofolate to 5,10-methenyltetrahydrofolate and then the hydrolysis of 5,10-methenyltetrahydrofolate to 10-formyltetrahydrofolate. This chain is Bifunctional protein FolD, found in Sulfurihydrogenibium sp. (strain YO3AOP1).